The following is a 304-amino-acid chain: Acetyl-coenzyme A carboxylase carboxyl transferase subunit beta (304 aa).

In terms of domain architecture, CoA carboxyltransferase N-terminal spans 23–292; sequence VWTKCDSCGQ…PNPEAPREGV (270 aa). Zn(2+)-binding residues include Cys-27, Cys-30, Cys-46, and Cys-49. A C4-type zinc finger spans residues 27-49; sequence CDSCGQVLYRAELERNLEVCPKC. The segment at 284-304 is disordered; it reads NPEAPREGVVVPPVPDQEPEA. A compositionally biased stretch (pro residues) spans 295 to 304; sequence PPVPDQEPEA.

This sequence belongs to the AccD/PCCB family. Acetyl-CoA carboxylase is a heterohexamer composed of biotin carboxyl carrier protein (AccB), biotin carboxylase (AccC) and two subunits each of ACCase subunit alpha (AccA) and ACCase subunit beta (AccD). The cofactor is Zn(2+).

It is found in the cytoplasm. It catalyses the reaction N(6)-carboxybiotinyl-L-lysyl-[protein] + acetyl-CoA = N(6)-biotinyl-L-lysyl-[protein] + malonyl-CoA. Its pathway is lipid metabolism; malonyl-CoA biosynthesis; malonyl-CoA from acetyl-CoA: step 1/1. In terms of biological role, component of the acetyl coenzyme A carboxylase (ACC) complex. Biotin carboxylase (BC) catalyzes the carboxylation of biotin on its carrier protein (BCCP) and then the CO(2) group is transferred by the transcarboxylase to acetyl-CoA to form malonyl-CoA. The polypeptide is Acetyl-coenzyme A carboxylase carboxyl transferase subunit beta (Shigella flexneri serotype 5b (strain 8401)).